Here is a 180-residue protein sequence, read N- to C-terminus: Large ribosomal subunit protein uL6 (180 aa).

This sequence belongs to the universal ribosomal protein uL6 family. Part of the 50S ribosomal subunit.

In terms of biological role, this protein binds to the 23S rRNA, and is important in its secondary structure. It is located near the subunit interface in the base of the L7/L12 stalk, and near the tRNA binding site of the peptidyltransferase center. The protein is Large ribosomal subunit protein uL6 of Anaeromyxobacter sp. (strain K).